A 144-amino-acid chain; its full sequence is 3-dehydroquinate dehydratase (144 aa).

Residue Y24 is the Proton acceptor of the active site. Substrate is bound by residues N76, H82, and D89. H102 acts as the Proton donor in catalysis. Substrate contacts are provided by residues 103–104 (LS) and R113.

Belongs to the type-II 3-dehydroquinase family. In terms of assembly, homododecamer.

It carries out the reaction 3-dehydroquinate = 3-dehydroshikimate + H2O. The protein operates within metabolic intermediate biosynthesis; chorismate biosynthesis; chorismate from D-erythrose 4-phosphate and phosphoenolpyruvate: step 3/7. In terms of biological role, catalyzes a trans-dehydration via an enolate intermediate. The polypeptide is 3-dehydroquinate dehydratase (Bordetella avium (strain 197N)).